The primary structure comprises 288 residues: Serine/threonine-protein phosphatase PGAM5, mitochondrial (288 aa).

The Mitochondrial matrix portion of the chain corresponds to 1–6; sequence MAFRQA. A helical transmembrane segment spans residues 7–29; the sequence is LQLAACGLAGGSAAVLFSAVAVG. Topologically, residues 30–288 are mitochondrial intermembrane; it reads KPRAGGDADT…FMPPDKITRS (259 aa). The segment at 76–81 is interaction with KEAP1; the sequence is NVEFGE. Phosphoserine is present on serine 86. N6-acetyllysine occurs at positions 115, 143, and 190.

It belongs to the phosphoglycerate mutase family. BPG-dependent PGAM subfamily. As to quaternary structure, dimer. Forms a ternary complex with NFE2L2 and KEAP1. Interacts with BCL2L1 and MAP3K5. Upon TNF-induced necrosis, forms in complex with RIPK1, RIPK3 and MLKL; the formation of this complex leads to PGAM5 phosphorylation. Isoform 2, but not isoform 1, interacts with DNM1L; this interaction leads to DNM1L dephosphorylation and activation and eventually to mitochondria fragmentation. In terms of processing, phosphorylated by the RIPK1/RIPK3 complex under necrotic conditions. This phosphorylation increases PGAM5 phosphatase activity. Post-translationally, proteolytically cleaved by PARL in response to loss of mitochondrial membrane potential.

Its subcellular location is the mitochondrion outer membrane. It localises to the mitochondrion inner membrane. It carries out the reaction O-phospho-L-seryl-[protein] + H2O = L-seryl-[protein] + phosphate. The catalysed reaction is O-phospho-L-threonyl-[protein] + H2O = L-threonyl-[protein] + phosphate. Its function is as follows. Mitochondrial serine/threonine phosphatase that dephosphorylates various substrates and thus plays a role in different biological processes including cellular senescence or mitophagy. Modulates cellular senescence by regulating mitochondrial dynamics. Mechanistically, participates in mitochondrial fission through dephosphorylating DNM1L/DRP1. Additionally, dephosphorylates MFN2 in a stress-sensitive manner and consequently protects it from ubiquitination and degradation to promote mitochondrial network formation. Regulates mitophagy independent of PARKIN by interacting with and dephosphorylating FUNDC1, which interacts with LC3. Regulates anti-oxidative response by forming a tertiary complex with KEAP1 and NRF2. Regulates necroptosis by acting as a RIPK3 target and recruiting the RIPK1-RIPK3-MLKL necrosis 'attack' complex to mitochondria. The chain is Serine/threonine-protein phosphatase PGAM5, mitochondrial (Pgam5) from Rattus norvegicus (Rat).